The following is a 3375-amino-acid chain: Basement membrane proteoglycan (3375 aa).

An N-terminal signal peptide occupies residues 1-22 (MKRSSTVLAALLALLLVATNDA). In terms of domain architecture, Ig-like C2-type 1 spans 45–130 (VQITVFPSEK…NTVEARATLS (86 aa)). Disulfide bonds link Cys66–Cys114, Cys149–Cys161, Cys156–Cys174, Cys168–Cys183, Cys190–Cys202, Cys197–Cys215, Cys209–Cys224, Cys233–Cys246, Cys240–Cys259, Cys253–Cys268, and Cys293–Cys344. LDL-receptor class A domains lie at 148 to 184 (QCMADEKACGNNECVKNDYVCDGEPDCRDRSDEANCP), 189 to 225 (TCEPNEFKCNNNKCVQKMWLCDGDDDCGDNSDELNCN), and 232 to 269 (DCKPTEFQCHDRRQCVPSSFHCDGTNDCHDGSDEVGCV). Positions 271–355 (PTVVDPPQTN…AINVKGRVLA (85 aa)) constitute an Ig-like C2-type 2 domain. A disordered region spans residues 364-385 (VDDPRPQPPQPPTAPPQRASCD). Residues 369–378 (PQPPQPPTAP) are compositionally biased toward pro residues. 3 cysteine pairs are disulfide-bonded: Cys384–Cys400, Cys402–Cys411, and Cys414–Cys429. Residues 384 to 431 (CDTRGAVTPYPNNYGTCECKSQVTGPNCDQCKPGAFHLSEKSPEGCLK) enclose the Laminin EGF-like 1; truncated domain. Positions 432–441 (CFCFGVSNDC) constitute a Laminin EGF-like 2; first part domain. The region spanning 450-633 (KDRLMFAGDA…PDGLALEVEQ (184 aa)) is the Laminin IV type A 1 domain. Intrachain disulfides connect Cys634–Cys648, Cys636–Cys689, Cys691–Cys700, and Cys703–Cys718. The 33-residue stretch at 634 to 666 (CVCPPGYLGTSCEDCAPGYERSGYGPYLGTCVP) folds into the Laminin EGF-like 2; second part domain. Residues 674 to 720 (CGPGAVAPTAPAQGQCQCKASVIGPNCDRCAPNSFGLAPTNPQGCIP) form the Laminin EGF-like 3; truncated domain. The 10-residue stretch at 721 to 730 (CFCSGVTQQC) folds into the Laminin EGF-like 4; first part domain. The 182-residue stretch at 740–921 (VSIDYARGDR…QGLTAAEVEQ (182 aa)) folds into the Laminin IV type A 2 domain. The Laminin EGF-like 4; second part domain occupies 922–954 (CICPPGYVGTSCEDCAPGYSRTGGGLYLGLCEK). 15 disulfides stabilise this stretch: Cys955-Cys964, Cys957-Cys971, Cys974-Cys983, Cys986-Cys1002, Cys1011-Cys1021, Cys1013-Cys1027, Cys1030-Cys1039, Cys1042-Cys1058, Cys1061-Cys1069, Cys1063-Cys1079, Cys1082-Cys1091, Cys1094-Cys1109, Cys1152-Cys1200, Cys1247-Cys1294, and Cys1338-Cys1384. 3 consecutive Laminin EGF-like domains span residues 955–1004 (CECN…DCQP), 1011–1060 (CHCN…DCTP), and 1061–1111 (CPCP…VCEP). Ig-like C2-type domains are found at residues 1126-1222 (PHEV…KRIS), 1226-1311 (PQPV…AVLE), 1319-1401 (PKVD…EPVQ), 1410-1499 (PQRG…ARLN), 1503-1585 (PQAI…RPVE), 1588-1680 (PARV…TPAT), 1690-1785 (PQVE…STLN), 1793-1878 (PRPV…VRLE), 1886-1970 (PTAV…GNVN), 1973-2069 (PSLT…IYIE), 2073-2163 (PSRI…AVHV), 2173-2260 (PKVE…TAVS), 2263-2343 (QQDK…GFVT), 2349-2435 (PDTI…RTVL), and 2446-2530 (TFTV…VDLQ). Over residues 1388–1400 (DPSDNTPLQSEPV) the composition is skewed to polar residues. Disordered stretches follow at residues 1388–1426 (DPSDNTPLQSEPVQLNIRDPAPPQRGAAPQIDPPNQTVN) and 1478–1497 (EYECTSTEPDGSTQLSPPAR). Asn1422 is a glycosylation site (N-linked (GlcNAc...) asparagine). Disulfide bonds link Cys1435–Cys1481, Cys1527–Cys1573, Cys1618–Cys1663, and Cys1719–Cys1767. Polar residues predominate over residues 1481–1497 (CTSTEPDGSTQLSPPAR). Positions 1773–1792 (NSPPVKTNPSTLNVTPEGTP) are disordered. The segment covering 1776–1788 (PVKTNPSTLNVTP) has biased composition (polar residues). Cystine bridges form between Cys1814–Cys1861, Cys1907–Cys1954, Cys1998–Cys2053, Cys2099–Cys2147, Cys2195–Cys2242, Cys2284–Cys2329, Cys2374–Cys2420, Cys2467–Cys2514, Cys2713–Cys2725, Cys2719–Cys2736, Cys2738–Cys2747, Cys2754–Cys2764, Cys2759–Cys2773, Cys2775–Cys2784, and Cys2935–Cys2960. The interval 1880 to 1918 (TEDQEPPTAVVEPRTWNGKPGERHQFRCITTGSPTPKIT) is disordered. Polar residues predominate over residues 1907-1918 (CITTGSPTPKIT). An N-linked (GlcNAc...) asparagine glycan is attached at Asn2476. The Laminin G-like 1 domain maps to 2532 to 2713 (DDFIPVIDGE…PSSVVKYDAC (182 aa)). Residues 2793–2960 (PLGFTSDTSF…LSSSGDISSC (168 aa)) enclose the Laminin G-like 2 domain. The N-linked (GlcNAc...) asparagine glycan is linked to Asn2950. Positions 2952-2963 (SSSGDISSCEES) are enriched in low complexity. The interval 2952–3124 (SSSGDISSCE…GTLPPDSSSE (173 aa)) is disordered. Composition is skewed to acidic residues over residues 2979-2990 (EEPEAVIEEPTT) and 2999-3010 (PITEEPTEEPTT). Over residues 3011 to 3033 (TEEPTTTEEPTTTTEEPTTTTTE) the composition is skewed to low complexity. A compositionally biased stretch (basic and acidic residues) spans 3034–3044 (EPYHIYETSRD). Over residues 3049-3079 (IIIPVETTTTSTTTTSTTEEPEAEPALVLPT) the composition is skewed to low complexity. Residues 3081 to 3094 (PVEENDVSDEEEEI) show a composition bias toward acidic residues. Disulfide bonds link Cys3141–Cys3152, Cys3146–Cys3162, Cys3164–Cys3173, and Cys3333–Cys3359. N-linked (GlcNAc...) asparagine glycans are attached at residues Asn3143 and Asn3156. A Laminin G-like 3 domain is found at 3180–3359 (EHAARFDGDA…AIDGKNVKPC (180 aa)).

In terms of assembly, component of an integrin containing attachment complex, composed of at least pat-2, pat-3, pat-4, pat-6, unc-52, unc-97 and unc-112. As to expression, detected on embryonic and adult body wall muscle cells (at protein level). Found in the basement membrane of all contractile tissues (at protein level). Expressed in gonadal sheath cells and spermatheca.

The protein localises to the secreted. Its subcellular location is the extracellular space. It localises to the extracellular matrix. It is found in the basement membrane. The protein resides in the cytoplasm. The protein localises to the myofibril. Its subcellular location is the sarcomere. It localises to the m line. Functionally, component of an integrin containing attachment complex, which is required for muscle development and maintenance. Probable structural role in myofilament assembly and/or attachment of the myofilament lattice to the cell membrane. May be an extracellular anchor for integrin receptors in body wall muscles and myoepithelial sheath cells. During the formation of neuromuscular junctions at the larval stage, negatively regulates membrane protrusion from body wall muscles, probably downstream of the integrin complex formed by pat-2 and pat-3. Involved in ovulation. Required for normal lifespan. The protein is Basement membrane proteoglycan of Caenorhabditis elegans.